A 198-amino-acid chain; its full sequence is Glycerol-3-phosphate acyltransferase (198 aa).

Helical transmembrane passes span 6-26, 55-75, 83-103, 113-133, and 154-174; these read FLPVALIIGYLFGSIPFGLIL, GLAAGTLLGDALKGTAAVIIS, AAMIAGLGAFLGHLFPVWLKF, IGILIGLFWPGAIFFCLVWLA, and IVLWAFGHTALAALFALLTLL.

The protein belongs to the PlsY family. Probably interacts with PlsX.

It localises to the cell inner membrane. It catalyses the reaction an acyl phosphate + sn-glycerol 3-phosphate = a 1-acyl-sn-glycero-3-phosphate + phosphate. It participates in lipid metabolism; phospholipid metabolism. Functionally, catalyzes the transfer of an acyl group from acyl-phosphate (acyl-PO(4)) to glycerol-3-phosphate (G3P) to form lysophosphatidic acid (LPA). This enzyme utilizes acyl-phosphate as fatty acyl donor, but not acyl-CoA or acyl-ACP. The sequence is that of Glycerol-3-phosphate acyltransferase from Bradyrhizobium sp. (strain BTAi1 / ATCC BAA-1182).